The sequence spans 304 residues: Killer cell immunoglobulin-like receptor 2DS1 (304 aa).

The first 21 residues, 1 to 21, serve as a signal peptide directing secretion; it reads MSLTVVSMACVGFFLLQGAWP. The Extracellular segment spans residues 22–245; the sequence is HEGVHRKPSL…SETGNPRHLH (224 aa). Ig-like C2-type domains are found at residues 42-107 and 142-205; these read EETV…VTHS and GENV…FRDS. Cysteines 49 and 100 form a disulfide. 4 N-linked (GlcNAc...) asparagine glycosylation sites follow: Asn-67, Asn-84, Asn-144, and Asn-178. Cys-149 and Cys-198 are disulfide-bonded. Residues 220–239 are disordered; sequence VTGNPSNSWPSPTEPSSETG. A compositionally biased stretch (low complexity) spans 223 to 239; that stretch reads NPSNSWPSPTEPSSETG. Residues 246–264 form a helical membrane-spanning segment; sequence VLIGTSVVKIPFTILLFFL. The Cytoplasmic segment spans residues 265–304; that stretch reads LHRWCSDKKNAAVMDQEPAGNRTVNSEDSDEQDHQEVSYA. The tract at residues 280–304 is disordered; the sequence is QEPAGNRTVNSEDSDEQDHQEVSYA.

The protein belongs to the immunoglobulin superfamily. Interacts with the adapter protein TYROBP/DAP12; the interaction enhances KIR2DS1 stability at the cell surface. Expressed by NK cells.

Its subcellular location is the cell membrane. Receptor on natural killer (NK) cells for some HLA-C alleles such as w6. Does not inhibit the activity of NK cells. The chain is Killer cell immunoglobulin-like receptor 2DS1 from Homo sapiens (Human).